Reading from the N-terminus, the 102-residue chain is RNA-binding protein Hfq (102 aa).

The region spanning 9 to 68 (DPFLNALRRERVPVSIYLVNGIKLQGQIESFDQFVILLKNTVSQMVYKHAISTVVPSRPV) is the Sm domain. The tract at residues 63-102 (VPSRPVSHHSNNAGGGASNNYHHGSNAQGSTAQQDSEETE) is disordered. The span at 70-88 (HHSNNAGGGASNNYHHGSN) shows a compositional bias: low complexity.

This sequence belongs to the Hfq family. As to quaternary structure, homohexamer.

RNA chaperone that binds small regulatory RNA (sRNAs) and mRNAs to facilitate mRNA translational regulation in response to envelope stress, environmental stress and changes in metabolite concentrations. Also binds with high specificity to tRNAs. The polypeptide is RNA-binding protein Hfq (Salmonella agona (strain SL483)).